The primary structure comprises 722 residues: Tegument protein UL46 (722 aa).

The disordered stretch occupies residues 423–534 (RLAASGPPGG…AAAARPLAAQ (112 aa)). Composition is skewed to basic and acidic residues over residues 440-451 (CRDKIQRTRRDN) and 474-491 (HRED…DRGP). Over residues 510-522 (PRLPPRNPAPPEQ) the composition is skewed to pro residues. Residues 523-534 (RPAAAARPLAAQ) show a composition bias toward low complexity.

The protein belongs to the herpesviridae HHV-1 VP11/12 protein family. In terms of assembly, interacts with VP16. Interacts with host LCK, PIK3R1, SHC1 AND GRB2; these interactions promote the activation of the PI3K/AKT pathway. Interacts with host YWHAB. Interacts with ICP0; this interaction targets UL46 for degradation by the proteasome. Post-translationally, phosphorylated by host LCK. The phosphorylation seems to be lymphocyte-specific.

Its subcellular location is the virion tegument. It localises to the host cell membrane. In terms of biological role, plays a role in the activation of the host PI3K/AKT pathway to promote cell survival. Interacts with and activates host LCK and thereby recruits downstream partners SHC1, GRB2 and PI3KR1 in order to activate the PI3K pathway by phosphorylating host AKT on its activating residues. This mechanism is inhibited by the viral protein US3 that instead promotes incorporation of UL46 into virions. The sequence is that of Tegument protein UL46 from Homo sapiens (Human).